A 236-amino-acid polypeptide reads, in one-letter code: Leucyl/phenylalanyl-tRNA--protein transferase (236 aa).

It belongs to the L/F-transferase family.

It localises to the cytoplasm. The catalysed reaction is N-terminal L-lysyl-[protein] + L-leucyl-tRNA(Leu) = N-terminal L-leucyl-L-lysyl-[protein] + tRNA(Leu) + H(+). It catalyses the reaction N-terminal L-arginyl-[protein] + L-leucyl-tRNA(Leu) = N-terminal L-leucyl-L-arginyl-[protein] + tRNA(Leu) + H(+). The enzyme catalyses L-phenylalanyl-tRNA(Phe) + an N-terminal L-alpha-aminoacyl-[protein] = an N-terminal L-phenylalanyl-L-alpha-aminoacyl-[protein] + tRNA(Phe). In terms of biological role, functions in the N-end rule pathway of protein degradation where it conjugates Leu, Phe and, less efficiently, Met from aminoacyl-tRNAs to the N-termini of proteins containing an N-terminal arginine or lysine. The protein is Leucyl/phenylalanyl-tRNA--protein transferase of Shewanella sp. (strain MR-4).